The sequence spans 378 residues: Succinyl-diaminopimelate desuccinylase (378 aa).

Residue histidine 67 coordinates Zn(2+). Aspartate 69 is an active-site residue. Zn(2+) is bound at residue aspartate 100. The active-site Proton acceptor is glutamate 134. 3 residues coordinate Zn(2+): glutamate 135, glutamate 163, and histidine 349.

It belongs to the peptidase M20A family. DapE subfamily. In terms of assembly, homodimer. The cofactor is Zn(2+). Requires Co(2+) as cofactor.

It catalyses the reaction N-succinyl-(2S,6S)-2,6-diaminopimelate + H2O = (2S,6S)-2,6-diaminopimelate + succinate. The protein operates within amino-acid biosynthesis; L-lysine biosynthesis via DAP pathway; LL-2,6-diaminopimelate from (S)-tetrahydrodipicolinate (succinylase route): step 3/3. Its function is as follows. Catalyzes the hydrolysis of N-succinyl-L,L-diaminopimelic acid (SDAP), forming succinate and LL-2,6-diaminopimelate (DAP), an intermediate involved in the bacterial biosynthesis of lysine and meso-diaminopimelic acid, an essential component of bacterial cell walls. The sequence is that of Succinyl-diaminopimelate desuccinylase from Nitrosomonas eutropha (strain DSM 101675 / C91 / Nm57).